Here is a 24-residue protein sequence, read N- to C-terminus: Brevinin-1SPa (24 aa).

Cysteine 18 and cysteine 24 are oxidised to a cystine.

In terms of tissue distribution, expressed by the skin glands.

The protein resides in the secreted. Its function is as follows. Antimicrobial peptide with activity against Gram-negative and Gram-positive bacteria (MIC=13 uM against E.coli, MIC=3 uM against S.aureus) and fungi (MIC=6 uM against C.albicans). Shows hemolytic activity on human erythrocytes (HC(50)=7 uM). The protein is Brevinin-1SPa of Lithobates septentrionalis (Mink frog).